Here is a 135-residue protein sequence, read N- to C-terminus: uncharacterized protein (135 aa).

Residues D68–L135 are a coiled coil. Positions E88–L135 are disordered. The segment covering D102–K117 has biased composition (acidic residues). Basic and acidic residues predominate over residues S118 to S129.

This is an uncharacterized protein from Acidianus hospitalis (AFV-1).